Reading from the N-terminus, the 290-residue chain is Nucleoid occlusion protein (290 aa).

Residues 153–172 (EALAQRLGKGQSTIANKLRL) constitute a DNA-binding region (H-T-H motif).

The protein belongs to the ParB family.

Its subcellular location is the cytoplasm. The protein localises to the nucleoid. Effects nucleoid occlusion by binding relatively nonspecifically to DNA and preventing the assembly of the division machinery in the vicinity of the nucleoid, especially under conditions that disturb the cell cycle. It helps to coordinate cell division and chromosome segregation by preventing the formation of the Z ring through the nucleoid, which would cause chromosome breakage. This chain is Nucleoid occlusion protein, found in Bacillus anthracis (strain A0248).